The following is a 119-amino-acid chain: Large ribosomal subunit protein uL22 (119 aa).

The protein belongs to the universal ribosomal protein uL22 family. Part of the 50S ribosomal subunit.

Functionally, this protein binds specifically to 23S rRNA; its binding is stimulated by other ribosomal proteins, e.g. L4, L17, and L20. It is important during the early stages of 50S assembly. It makes multiple contacts with different domains of the 23S rRNA in the assembled 50S subunit and ribosome. Its function is as follows. The globular domain of the protein is located near the polypeptide exit tunnel on the outside of the subunit, while an extended beta-hairpin is found that lines the wall of the exit tunnel in the center of the 70S ribosome. The polypeptide is Large ribosomal subunit protein uL22 (Chlorobium luteolum (strain DSM 273 / BCRC 81028 / 2530) (Pelodictyon luteolum)).